Here is a 380-residue protein sequence, read N- to C-terminus: Cytochrome b (380 aa).

Helical transmembrane passes span 34 to 54 (FGSLLGLCLVTQILTGLLLAT), 78 to 99 (WLIRNLHANGASFFFICIYLHI), 114 to 134 (WNTGILLLLTLMATAFVGYVL), and 179 to 199 (FFALHFLLPFMIAGLTLIHLT). Residues His-84 and His-98 each contribute to the heme b site. Positions 183 and 197 each coordinate heme b. An a ubiquinone-binding site is contributed by His-202. 4 helical membrane-spanning segments follow: residues 227-247 (LKDTLGFMFMLFLLTTLALFS), 289-309 (LGGVLALAASVLILFLSPLLH), 321-341 (FSQFLFWLLIANLLILTWVGS), and 348-368 (FIIIGQLASLTYFTILLILLP).

The protein belongs to the cytochrome b family. In terms of assembly, the cytochrome bc1 complex contains 11 subunits: 3 respiratory subunits (MT-CYB, CYC1 and UQCRFS1), 2 core proteins (UQCRC1 and UQCRC2) and 6 low-molecular weight proteins (UQCRH/QCR6, UQCRB/QCR7, UQCRQ/QCR8, UQCR10/QCR9, UQCR11/QCR10 and a cleavage product of UQCRFS1). This cytochrome bc1 complex then forms a dimer. Heme b serves as cofactor.

The protein resides in the mitochondrion inner membrane. In terms of biological role, component of the ubiquinol-cytochrome c reductase complex (complex III or cytochrome b-c1 complex) that is part of the mitochondrial respiratory chain. The b-c1 complex mediates electron transfer from ubiquinol to cytochrome c. Contributes to the generation of a proton gradient across the mitochondrial membrane that is then used for ATP synthesis. This chain is Cytochrome b (MT-CYB), found in Garrodia nereis (Grey-backed storm-petrel).